We begin with the raw amino-acid sequence, 783 residues long: BMP/retinoic acid-inducible neural-specific protein 2 (783 aa).

The signal sequence occupies residues 1-33 (MRWPCSSRFRGLWPEAAPWAVLLALGVPGWVLA). An MACPF domain is found at 85–281 (RYRIYREFAR…FVAAALSYIT (197 aa)). N-linked (GlcNAc...) asparagine glycans are attached at residues N185, N354, N473, N579, N626, and N658.

The protein belongs to the BRINP family. In terms of tissue distribution, expressed in olfactory bulb, cerebellum and neuronal layers in hippocampus.

The protein localises to the secreted. In terms of biological role, inhibits neuronal cell proliferation by negative regulation of the cell cycle transition. This is BMP/retinoic acid-inducible neural-specific protein 2 (Brinp2) from Rattus norvegicus (Rat).